The sequence spans 209 residues: A-type ATP synthase subunit D (209 aa).

The protein belongs to the V-ATPase D subunit family. Has multiple subunits with at least A(3), B(3), C, D, E, F, H, I and proteolipid K(x).

It localises to the cell membrane. Functionally, component of the A-type ATP synthase that produces ATP from ADP in the presence of a proton gradient across the membrane. The polypeptide is A-type ATP synthase subunit D (Thermoplasma volcanium (strain ATCC 51530 / DSM 4299 / JCM 9571 / NBRC 15438 / GSS1)).